The following is a 605-amino-acid chain: Dynein axonemal intermediate chain 2 (605 aa).

7 WD repeats span residues 150–203, 208–246, 253–294, 301–347, 355–393, 399–437, and 443–481; these read KTIN…IWDL, KPEL…CWDT, AELS…WWDI, TEVV…SCNR, KIVC…IWSE, SIMW…IWDF, and DPTL…LLEV. The segment at 568-605 is disordered; it reads IKLTPVPQQPSPEEDQVVEEGEEAAGEEGDEEVEEDLA. The segment covering 579–605 has biased composition (acidic residues); it reads PEEDQVVEEGEEAAGEEGDEEVEEDLA.

Belongs to the dynein intermediate chain family. In terms of assembly, consists of at least two heavy chains and a number of intermediate and light chains. Interacts with DNAAF2. Interacts with DNAAF6/PIH1D3. Interacts with HEATR2; probably involved in outer arm dynein assembly. Interacts with CFAP53. As to expression, highly expressed in trachea and testis. Expressed in respiratory ciliated cells (at protein level).

The protein localises to the cytoplasm. It localises to the cytoskeleton. Its subcellular location is the cilium axoneme. The protein resides in the dynein axonemal particle. Functionally, part of the dynein complex of respiratory cilia. The chain is Dynein axonemal intermediate chain 2 from Homo sapiens (Human).